Here is a 427-residue protein sequence, read N- to C-terminus: MKLRTNAGPLQGTIQVPGDKSISHRAVILGAVAKGETRVKGLLKGEDVLSTIQAFRNLGVRIEEKDDQLVIEGQGFQGLTAPCQTLNMGNSGTSMRLIAGLLAGQPFSVKMIGDESLSKRPMDRIVYPLKQMGVEISGETDRQFPPLQLQGNHNLQPITYTLPISSAQVKSAILLAALQAKGTTQVVEKEITRNHTEEMIQQFGGRLIVDGKRITLVGPQQLTAQEITVPGDISSAAFWLVAGLIIPGSELLLKNVGVNPTRTGILEVVEKMGAQIVYEDMNKKEQVTSIRVVYSRLKGTIISGGLIPRLIDELPIIALLATQAQGTTCIKDAQELRVKETDRIQVVTDTLNSMGANIKATADGMIIKGPTVLYGANTSTYGDHRIGMMTAIAALLVKQGQVHLDKEEAIMTSYPTFFKDLERLCHD.

Residues Lys20, Ser21, and Arg25 each contribute to the 3-phosphoshikimate site. Residue Lys20 participates in phosphoenolpyruvate binding. Residues Gly92 and Arg120 each coordinate phosphoenolpyruvate. Residues Ser166, Gln168, Asp312, and Lys339 each coordinate 3-phosphoshikimate. Gln168 contacts phosphoenolpyruvate. Asp312 serves as the catalytic Proton acceptor. Residues Arg343 and Arg385 each coordinate phosphoenolpyruvate.

Belongs to the EPSP synthase family. As to quaternary structure, monomer.

It is found in the cytoplasm. It catalyses the reaction 3-phosphoshikimate + phosphoenolpyruvate = 5-O-(1-carboxyvinyl)-3-phosphoshikimate + phosphate. The protein operates within metabolic intermediate biosynthesis; chorismate biosynthesis; chorismate from D-erythrose 4-phosphate and phosphoenolpyruvate: step 6/7. In terms of biological role, catalyzes the transfer of the enolpyruvyl moiety of phosphoenolpyruvate (PEP) to the 5-hydroxyl of shikimate-3-phosphate (S3P) to produce enolpyruvyl shikimate-3-phosphate and inorganic phosphate. This is 3-phosphoshikimate 1-carboxyvinyltransferase from Streptococcus pyogenes serotype M4 (strain MGAS10750).